The following is a 438-amino-acid chain: Proline--tRNA ligase (438 aa).

The protein belongs to the class-II aminoacyl-tRNA synthetase family. ProS type 2 subfamily. As to quaternary structure, homodimer.

The protein localises to the cytoplasm. It carries out the reaction tRNA(Pro) + L-proline + ATP = L-prolyl-tRNA(Pro) + AMP + diphosphate. In terms of biological role, catalyzes the attachment of proline to tRNA(Pro) in a two-step reaction: proline is first activated by ATP to form Pro-AMP and then transferred to the acceptor end of tRNA(Pro). This is Proline--tRNA ligase from Rickettsia canadensis (strain McKiel).